The sequence spans 127 residues: Glycine cleavage system H protein (127 aa).

One can recognise a Lipoyl-binding domain in the interval 22–103 (EAYIGITDFA…AFANWIIKVE (82 aa)). Position 63 is an N6-lipoyllysine (Lys-63).

The protein belongs to the GcvH family. In terms of assembly, the glycine cleavage system is composed of four proteins: P, T, L and H. Requires (R)-lipoate as cofactor.

Functionally, the glycine cleavage system catalyzes the degradation of glycine. The H protein shuttles the methylamine group of glycine from the P protein to the T protein. In Alkaliphilus oremlandii (strain OhILAs) (Clostridium oremlandii (strain OhILAs)), this protein is Glycine cleavage system H protein.